The following is a 119-amino-acid chain: Basic phospholipase A2 homolog 1 (119 aa).

Cystine bridges form between Cys-11-Cys-72, Cys-27-Cys-118, Cys-29-Cys-45, Cys-44-Cys-99, Cys-51-Cys-92, Cys-61-Cys-85, and Cys-79-Cys-90. Residues 107-117 (KENYNIDPKKR) form an important for membrane-damaging activities in eukaryotes and bacteria; heparin-binding region.

This sequence belongs to the phospholipase A2 family. Group I subfamily. D49 sub-subfamily. Expressed by the venom gland.

It is found in the secreted. The protein is Basic phospholipase A2 homolog 1 of Notechis scutatus scutatus (Mainland tiger snake).